A 373-amino-acid polypeptide reads, in one-letter code: Lipoyl synthase (373 aa).

A disordered region spans residues 12–36 (HVVSNDHPSSSPLQPGVKQSGEDKI). [4Fe-4S] cluster is bound by residues Cys81, Cys86, Cys92, Cys107, Cys111, Cys114, and Ser323. Residues 93–312 (FSHGTATFMI…EEYGMALGFS (220 aa)) enclose the Radical SAM core domain. The tract at residues 346 to 373 (PAVSSTEHRERHTIASKSASKTESIRHR) is disordered.

Belongs to the radical SAM superfamily. Lipoyl synthase family. [4Fe-4S] cluster serves as cofactor.

It localises to the cytoplasm. It catalyses the reaction [[Fe-S] cluster scaffold protein carrying a second [4Fe-4S](2+) cluster] + N(6)-octanoyl-L-lysyl-[protein] + 2 oxidized [2Fe-2S]-[ferredoxin] + 2 S-adenosyl-L-methionine + 4 H(+) = [[Fe-S] cluster scaffold protein] + N(6)-[(R)-dihydrolipoyl]-L-lysyl-[protein] + 4 Fe(3+) + 2 hydrogen sulfide + 2 5'-deoxyadenosine + 2 L-methionine + 2 reduced [2Fe-2S]-[ferredoxin]. The protein operates within protein modification; protein lipoylation via endogenous pathway; protein N(6)-(lipoyl)lysine from octanoyl-[acyl-carrier-protein]: step 2/2. Functionally, catalyzes the radical-mediated insertion of two sulfur atoms into the C-6 and C-8 positions of the octanoyl moiety bound to the lipoyl domains of lipoate-dependent enzymes, thereby converting the octanoylated domains into lipoylated derivatives. In Xylella fastidiosa (strain 9a5c), this protein is Lipoyl synthase.